A 136-amino-acid polypeptide reads, in one-letter code: Glutamate mutase sigma subunit (136 aa).

The region spanning 3-136 is the B12-binding domain; that stretch reads KKKIVIGVIG…IIDLKKDFKI (134 aa). Adenosylcob(III)alamin-binding positions include 13–17, His-16, and 61–63; these read SDCHT and SSI.

Belongs to the methylaspartate mutase GlmS subunit family. Heterotetramer composed of 2 epsilon subunits (GlmE) and 2 sigma subunits (GlmS). GlmE exists as a homodimer and GlmS as a monomer. Adenosylcob(III)alamin serves as cofactor.

It carries out the reaction (2S,3S)-3-methyl-L-aspartate = L-glutamate. The protein operates within amino-acid degradation; L-glutamate degradation via mesaconate pathway; acetate and pyruvate from L-glutamate: step 1/4. In terms of biological role, catalyzes the carbon skeleton rearrangement of L-glutamate to L-threo-3-methylaspartate ((2S,3S)-3-methylaspartate). This is Glutamate mutase sigma subunit from Fusobacterium nucleatum subsp. nucleatum (strain ATCC 25586 / DSM 15643 / BCRC 10681 / CIP 101130 / JCM 8532 / KCTC 2640 / LMG 13131 / VPI 4355).